The primary structure comprises 188 residues: Adenylate kinase (188 aa).

11–16 (GAGKGT) serves as a coordination point for ATP. Residues 31-60 (STGDIFRANIKDQTELGREAQRYTDAGNLV) are NMP. Residues threonine 32, arginine 37, 58 to 60 (NLV), 86 to 89 (GYPR), and glutamine 93 each bind AMP. Residues 127–137 (GRAQEQGRTDD) form an LID region. Arginine 128 serves as a coordination point for ATP. AMP-binding residues include arginine 134 and arginine 145. An ATP-binding site is contributed by glycine 173.

This sequence belongs to the adenylate kinase family. Monomer.

Its subcellular location is the cytoplasm. The catalysed reaction is AMP + ATP = 2 ADP. The protein operates within purine metabolism; AMP biosynthesis via salvage pathway; AMP from ADP: step 1/1. In terms of biological role, catalyzes the reversible transfer of the terminal phosphate group between ATP and AMP. Plays an important role in cellular energy homeostasis and in adenine nucleotide metabolism. The protein is Adenylate kinase of Kocuria rhizophila (strain ATCC 9341 / DSM 348 / NBRC 103217 / DC2201).